A 153-amino-acid polypeptide reads, in one-letter code: MRVVIQRVNFSQVKVNEEIVGKIGKGLNLLVAISTTDTEAEIDWIVRKCLDLRLFPDPDSNNNFWEKSVKDIDGELLIVSQFTLYGDCRKGRRPSFDNSASPEVAKQLYQLFVEKLKLSGLKVATGIFGAMMQVEIDNDGPVTFLLEKEANNK.

Positions 140–141 match the Gly-cisPro motif, important for rejection of L-amino acids motif; the sequence is GP.

The protein belongs to the DTD family. Homodimer.

It is found in the cytoplasm. It carries out the reaction glycyl-tRNA(Ala) + H2O = tRNA(Ala) + glycine + H(+). It catalyses the reaction a D-aminoacyl-tRNA + H2O = a tRNA + a D-alpha-amino acid + H(+). An aminoacyl-tRNA editing enzyme that deacylates mischarged D-aminoacyl-tRNAs. Also deacylates mischarged glycyl-tRNA(Ala), protecting cells against glycine mischarging by AlaRS. Acts via tRNA-based rather than protein-based catalysis; rejects L-amino acids rather than detecting D-amino acids in the active site. By recycling D-aminoacyl-tRNA to D-amino acids and free tRNA molecules, this enzyme counteracts the toxicity associated with the formation of D-aminoacyl-tRNA entities in vivo and helps enforce protein L-homochirality. The sequence is that of D-aminoacyl-tRNA deacylase from Trichodesmium erythraeum (strain IMS101).